A 213-amino-acid polypeptide reads, in one-letter code: Probable nicotinate-nucleotide adenylyltransferase (213 aa).

It belongs to the NadD family.

It catalyses the reaction nicotinate beta-D-ribonucleotide + ATP + H(+) = deamido-NAD(+) + diphosphate. Its pathway is cofactor biosynthesis; NAD(+) biosynthesis; deamido-NAD(+) from nicotinate D-ribonucleotide: step 1/1. Catalyzes the reversible adenylation of nicotinate mononucleotide (NaMN) to nicotinic acid adenine dinucleotide (NaAD). This chain is Probable nicotinate-nucleotide adenylyltransferase, found in Pectobacterium atrosepticum (strain SCRI 1043 / ATCC BAA-672) (Erwinia carotovora subsp. atroseptica).